A 553-amino-acid chain; its full sequence is CDP-diacylglycerol--glycerol-3-phosphate 3-phosphatidyltransferase, mitochondrial (553 aa).

The transit peptide at Met-1 to Ala-25 directs the protein to the mitochondrion. The residue at position 46 (Ser-46) is a Phosphoserine. Residue Ala-121 to Gly-128 coordinates ATP. PLD phosphodiesterase domains follow at residues Thr-212–Tyr-238 and Arg-457–Ser-490. Catalysis depends on residues His-217, Lys-219, and Asp-224.

The protein belongs to the CDP-alcohol phosphatidyltransferase class-II family. In terms of tissue distribution, widely expressed with higher expression in testis, liver and brain.

It localises to the mitochondrion. The catalysed reaction is a CDP-1,2-diacyl-sn-glycerol + sn-glycerol 3-phosphate = a 1,2-diacyl-sn-glycero-3-phospho-(1'-sn-glycero-3'-phosphate) + CMP + H(+). It functions in the pathway phospholipid metabolism; phosphatidylglycerol biosynthesis; phosphatidylglycerol from CDP-diacylglycerol: step 1/2. Activated by calcium and magnesium and inhibited by other bivalent cations. Functions in the biosynthesis of the anionic phospholipids phosphatidylglycerol and cardiolipin. The protein is CDP-diacylglycerol--glycerol-3-phosphate 3-phosphatidyltransferase, mitochondrial (Pgs1) of Mus musculus (Mouse).